A 155-amino-acid chain; its full sequence is SsrA-binding protein (155 aa).

This sequence belongs to the SmpB family.

It localises to the cytoplasm. In terms of biological role, required for rescue of stalled ribosomes mediated by trans-translation. Binds to transfer-messenger RNA (tmRNA), required for stable association of tmRNA with ribosomes. tmRNA and SmpB together mimic tRNA shape, replacing the anticodon stem-loop with SmpB. tmRNA is encoded by the ssrA gene; the 2 termini fold to resemble tRNA(Ala) and it encodes a 'tag peptide', a short internal open reading frame. During trans-translation Ala-aminoacylated tmRNA acts like a tRNA, entering the A-site of stalled ribosomes, displacing the stalled mRNA. The ribosome then switches to translate the ORF on the tmRNA; the nascent peptide is terminated with the 'tag peptide' encoded by the tmRNA and targeted for degradation. The ribosome is freed to recommence translation, which seems to be the essential function of trans-translation. In Lactococcus lactis subsp. lactis (strain IL1403) (Streptococcus lactis), this protein is SsrA-binding protein.